A 535-amino-acid chain; its full sequence is BAR/IMD domain-containing adapter protein 2 (535 aa).

The region spanning 1–250 (MSLSRSEEMH…AQLMQQMANS (250 aa)) is the IMD domain. A coiled-coil region spans residues 1–251 (MSLSRSEEMH…QLMQQMANSN (251 aa)). Residues Ser-262, Ser-324, Ser-326, and Ser-337 each carry the phosphoserine modification. The interval 308 to 370 (SEDYNPWADR…TLPRSSSMAA (63 aa)) is disordered. The span at 321–335 (QPKSLSPPQSQSKLS) shows a compositional bias: low complexity. At Thr-341 the chain carries Phosphothreonine. Ser-347 carries the post-translational modification Phosphoserine. Polar residues predominate over residues 349 to 368 (TPKNSYATTENKTLPRSSSM). Thr-361 is modified (phosphothreonine). Phosphoserine is present on residues Ser-367, Ser-385, Ser-396, and Ser-455. An SH3 domain is found at 375–438 (NGRMRVKAIF…PFSYTRVLDS (64 aa)). The tract at residues 445–486 (HMSLQQGKSSSTGNLLDKDDLALPPPDYGTSSRAFPSQTAGT) is disordered. Polar residues-rich tracts occupy residues 447-458 (SLQQGKSSSTGN) and 473-486 (GTSS…TAGT).

As to quaternary structure, homodimer. Interacts with CDC42 and RAC1 that have been activated by GTP binding. Binds TIAM1. Interacts with ATN1, ADGRB1, DIAPH1, EPS8, SHANK1, SHANK2, SHANK3, WASF1 and WASF2. Interacts with ENAH after recruitment of CDC42. In terms of processing, phosphorylated on tyrosine residues by INSR in response to insulin treatment. As to expression, ubiquitous.

It localises to the cytoplasm. The protein localises to the membrane. It is found in the cell projection. Its subcellular location is the filopodium. The protein resides in the ruffle. It localises to the cytoskeleton. Functionally, adapter protein that links membrane-bound small G-proteins to cytoplasmic effector proteins. Necessary for CDC42-mediated reorganization of the actin cytoskeleton and for RAC1-mediated membrane ruffling. Involved in the regulation of the actin cytoskeleton by WASF family members and the Arp2/3 complex. Plays a role in neurite growth. Acts syngeristically with ENAH to promote filipodia formation. Plays a role in the reorganization of the actin cytoskeleton in response to bacterial infection. Participates in actin bundling when associated with EPS8, promoting filopodial protrusions. The protein is BAR/IMD domain-containing adapter protein 2 (Baiap2) of Rattus norvegicus (Rat).